Consider the following 324-residue polypeptide: Cyclic GMP-AMP synthase CdnE03 (324 aa).

Mg(2+)-binding residues include D87 and D89. ATP contacts are provided by residues D89, 144 to 145 (NK), and D159. Residue D159 coordinates Mg(2+). Positions 224 and 243 each coordinate GTP.

This sequence belongs to the CD-NTase family. E03 subfamily. The cofactor is Mg(2+).

It catalyses the reaction GTP + ATP = 3',2'-cGAMP + 2 diphosphate. Activated by a virus-derived, approximately 400 nucleotide RNA (called CBASS-activating bacteriophage RNA, cabRNA) that begins in the viral terminase subunit terS and extends into terL. RNA secondary and/or tertiary structure, as well as viral infection itself, are important for CdnE activation. A much longer RNA (escaper RNA) with a different secondary structure, derived from a terS-mutated virus still binds to this protein, but does not activate its nucleotide cyclase activity. Shorter viral-derived RNAs (34 and 49 nt) with extensive predicted secondary structure also activate the enzyme, although not as well as full-length cabRNA. Functionally, cyclic nucleotide synthase (second messenger synthase) of a CBASS antivirus system. CBASS (cyclic oligonucleotide-based antiphage signaling system) provides immunity against bacteriophage. The CD-NTase protein synthesizes cyclic nucleotides in response to infection; these serve as specific second messenger signals. The signals activate a diverse range of effectors, leading to bacterial cell death and thus abortive phage infection. The effector for this system is downstream Cap15. A type I-B CBASS system. Cyclic dinucleotide synthase that catalyzes the synthesis of 3',2'-cyclic GMP-AMP (cGAMP) from GTP and ATP upon activation by viral-derived cabRNA. Binds cabRNA via positive charges in its N-terminus. Its function is as follows. Protects S.aureus against phage infection. When the CBASS operon (cdnE-cap15) is introduced in S.aureus strain RN4220 there is strong protection against lytic DNA phages 80alpha-vir and phi-NM1-gamma-6 but little to no protection against phages phi-NM4-gamma-4 or phi-12-gamma-3. The protein is Cyclic GMP-AMP synthase CdnE03 of Staphylococcus schleiferi.